Here is a 379-residue protein sequence, read N- to C-terminus: Beta-1,3-N-acetylglucosaminyltransferase lunatic fringe (379 aa).

Topologically, residues 1 to 8 (MLKRCGRR) are cytoplasmic. Residues 9–29 (LLLALAGALLACLLVLTADPP) form a helical; Signal-anchor for type II membrane protein membrane-spanning segment. The Lumenal portion of the chain corresponds to 30–379 (PPPLPAERGR…TPWCPRTAIF (350 aa)). The disordered stretch occupies residues 86 to 107 (RDAGPPPGAAPRPADGHPRPLA). Arg-129 serves as a coordination point for substrate. N-linked (GlcNAc...) asparagine glycosylation is present at Asn-167. 2 disulfide bridges follow: Cys-168/Cys-179 and Cys-197/Cys-260. Asp-201 contacts substrate. Asp-202 contributes to the Mn(2+) binding site. Asp-290 is a catalytic residue. Position 314 (His-314) interacts with Mn(2+). The cysteines at positions 364 and 373 are disulfide-linked.

The protein belongs to the glycosyltransferase 31 family. Requires Mn(2+) as cofactor. It depends on Co(2+) as a cofactor. In terms of processing, a soluble form may be derived from the membrane form by proteolytic processing.

It localises to the golgi apparatus. Its subcellular location is the golgi apparatus membrane. It carries out the reaction 3-O-(alpha-L-fucosyl)-L-threonyl-[EGF-like domain protein] + UDP-N-acetyl-alpha-D-glucosamine = 3-O-(N-acetyl-beta-D-glucosaminyl-(1-&gt;3)-alpha-L-fucosyl)-L-threonyl-[EGF-like domain protein] + UDP + H(+). The catalysed reaction is 3-O-(alpha-L-fucosyl)-L-seryl-[EGF-like domain protein] + UDP-N-acetyl-alpha-D-glucosamine = 3-O-(N-acetyl-beta-D-glucosaminyl-(1-&gt;3)-alpha-L-fucosyl)-L-seryl-[EGF-like domain protein] + UDP + H(+). Functionally, glycosyltransferase that initiates the elongation of O-linked fucose residues attached to EGF-like repeats in the extracellular domain of Notch molecules. Modulates NOTCH1 activity by modifying O-fucose residues at specific EGF-like domains resulting in inhibition of NOTCH1 activation by JAG1 and enhancement of NOTCH1 activation by DLL1 via an increase in its binding to DLL1. Decreases the binding of JAG1 to NOTCH2 but not that of DLL1. Essential mediator of somite segmentation and patterning. The protein is Beta-1,3-N-acetylglucosaminyltransferase lunatic fringe of Homo sapiens (Human).